The sequence spans 148 residues: Large ribosomal subunit protein bL9 (148 aa).

It belongs to the bacterial ribosomal protein bL9 family.

Functionally, binds to the 23S rRNA. The polypeptide is Large ribosomal subunit protein bL9 (Parabacteroides distasonis (strain ATCC 8503 / DSM 20701 / CIP 104284 / JCM 5825 / NCTC 11152)).